A 326-amino-acid polypeptide reads, in one-letter code: Serine hydrolase-like protein (326 aa).

The 112-residue stretch at 44–155 (PVLCLHGWAD…FLPTEVTDMF (112 aa)) folds into the AB hydrolase-1 domain. S118 is an active-site residue.

The protein belongs to the AB hydrolase superfamily.

Probable serine hydrolase. The protein is Serine hydrolase-like protein (serhl) of Danio rerio (Zebrafish).